Consider the following 49-residue polypeptide: uncharacterized protein (49 aa).

The segment at 1–49 (MSNETFEQNEPKPTKVEELQPGDVEAVEDSTPVREITQTDHINKAMLQI) is disordered. A compositionally biased stretch (basic and acidic residues) spans 9–18 (NEPKPTKVEE).

This is an uncharacterized protein from Dictyostelium discoideum (Social amoeba).